The following is a 500-amino-acid chain: Zinc finger protein 689 (500 aa).

Residues 1 to 24 are disordered; that stretch reads MAPPSAPLLEQAPGEVGPTRRRGR. The KRAB domain occupies 29–100; that stretch reads LKFADVAVYF…AALDPQEYRR (72 aa). Positions 110-144 are disordered; sequence TRQKNEEKEVFPPKDVPRKGKRGRKPSKPRLIARQ. A compositionally biased stretch (basic and acidic residues) spans 112 to 127; sequence QKNEEKEVFPPKDVPR. The span at 128–137 shows a compositional bias: basic residues; sequence KGKRGRKPSK. A C2H2-type 1; degenerate zinc finger spans residues 149 to 171; it reads PICPDCGCTFPDLPALESHKCAQ. C2H2-type zinc fingers lie at residues 177-199, 205-227, 233-255, 261-283, 289-311, 317-339, 345-367, 373-395, 401-423, and 429-451; these read YPCPDCGRRFSYPSLLVSHRRAH, YVCDQCGKRFSQRKNLSQHQVIH, YHCPDCGRCFRRSRSLANHRTTH, HQCPSCGRRFAYPSLLAIHQRTH, YTCLECSRRFRQRTALVIHQRIH, YPCPDCERRFSSSSRLVSHRRVH, YACEHCEARFSQRSTLLQHQLLH, YPCPDCGRAFRRSGSLAIHRSTH, HACDDCGRRFAYPSLLASHRRVH, and YACDLCSKRFAQWSHLAQHQLLH. Lysine 455 is covalently cross-linked (Glycyl lysine isopeptide (Lys-Gly) (interchain with G-Cter in SUMO2)). The C2H2-type 12 zinc finger occupies 457–482; sequence FPCLECGRCFRQRWSLAVHKCCPNTH.

It belongs to the krueppel C2H2-type zinc-finger protein family.

It is found in the nucleus. May be involved in transcriptional regulation. The polypeptide is Zinc finger protein 689 (Znf689) (Rattus norvegicus (Rat)).